The chain runs to 215 residues: dITP/XTP pyrophosphatase (215 aa).

13 to 18 (THNTGK) provides a ligand contact to substrate. Catalysis depends on Asp74, which acts as the Proton acceptor. Asp74 contacts Mg(2+). Substrate contacts are provided by residues Ser75, 163–166 (FGFD), Lys186, and 199–200 (HR).

The protein belongs to the HAM1 NTPase family. In terms of assembly, homodimer. Mg(2+) serves as cofactor.

The catalysed reaction is XTP + H2O = XMP + diphosphate + H(+). It carries out the reaction dITP + H2O = dIMP + diphosphate + H(+). It catalyses the reaction ITP + H2O = IMP + diphosphate + H(+). Its function is as follows. Pyrophosphatase that catalyzes the hydrolysis of nucleoside triphosphates to their monophosphate derivatives, with a high preference for the non-canonical purine nucleotides XTP (xanthosine triphosphate), dITP (deoxyinosine triphosphate) and ITP. Seems to function as a house-cleaning enzyme that removes non-canonical purine nucleotides from the nucleotide pool, thus preventing their incorporation into DNA/RNA and avoiding chromosomal lesions. This chain is dITP/XTP pyrophosphatase, found in Bartonella quintana (strain Toulouse) (Rochalimaea quintana).